The sequence spans 33 residues: Photosystem II reaction center protein Psb30 (33 aa).

A helical membrane pass occupies residues 5 to 25; it reads VILQLGSILLVVAAGPLVIVL.

The protein belongs to the Psb30/Ycf12 family. As to quaternary structure, PSII is composed of 1 copy each of membrane proteins PsbA, PsbB, PsbC, PsbD, PsbE, PsbF, PsbH, PsbI, PsbJ, PsbK, PsbL, PsbM, PsbT, PsbX, PsbY, PsbZ, Psb30/Ycf12, peripheral proteins of the oxygen-evolving complex and a large number of cofactors. It forms dimeric complexes.

The protein localises to the plastid. Its subcellular location is the chloroplast thylakoid membrane. Functionally, a core subunit of photosystem II (PSII), probably helps stabilize the reaction center. This is Photosystem II reaction center protein Psb30 from Oltmannsiellopsis viridis (Marine flagellate).